Reading from the N-terminus, the 227-residue chain is Triosephosphate isomerase (227 aa).

Residue 9–11 coordinates substrate; it reads NFK. The Electrophile role is filled by histidine 93. Glutamate 141 acts as the Proton acceptor in catalysis. Substrate-binding positions include isoleucine 146, glycine 180, and 201-202; that span reads AS.

This sequence belongs to the triosephosphate isomerase family. As to quaternary structure, homotetramer; dimer of dimers.

The protein localises to the cytoplasm. The enzyme catalyses D-glyceraldehyde 3-phosphate = dihydroxyacetone phosphate. The protein operates within carbohydrate biosynthesis; gluconeogenesis. It participates in carbohydrate degradation; glycolysis; D-glyceraldehyde 3-phosphate from glycerone phosphate: step 1/1. Involved in the gluconeogenesis. Catalyzes stereospecifically the conversion of dihydroxyacetone phosphate (DHAP) to D-glyceraldehyde-3-phosphate (G3P). The sequence is that of Triosephosphate isomerase from Saccharolobus solfataricus (strain ATCC 35092 / DSM 1617 / JCM 11322 / P2) (Sulfolobus solfataricus).